The chain runs to 195 residues: Phosphoheptose isomerase (195 aa).

The region spanning isoleucine 37–glutamine 195 is the SIS domain. Asparagine 52–glycine 54 provides a ligand contact to substrate. Residues histidine 61 and glutamate 65 each contribute to the Zn(2+) site. Residues glutamate 65, asparagine 93 to aspartate 94, serine 119 to serine 121, serine 124, and glutamine 172 each bind substrate. Glutamine 172 and histidine 180 together coordinate Zn(2+).

Belongs to the SIS family. GmhA subfamily. In terms of assembly, homotetramer. Requires Zn(2+) as cofactor.

Its subcellular location is the cytoplasm. It carries out the reaction 2 D-sedoheptulose 7-phosphate = D-glycero-alpha-D-manno-heptose 7-phosphate + D-glycero-beta-D-manno-heptose 7-phosphate. It functions in the pathway carbohydrate biosynthesis; D-glycero-D-manno-heptose 7-phosphate biosynthesis; D-glycero-alpha-D-manno-heptose 7-phosphate and D-glycero-beta-D-manno-heptose 7-phosphate from sedoheptulose 7-phosphate: step 1/1. Its function is as follows. Catalyzes the isomerization of sedoheptulose 7-phosphate in D-glycero-D-manno-heptose 7-phosphate. This Histophilus somni (strain 2336) (Haemophilus somnus) protein is Phosphoheptose isomerase.